A 228-amino-acid chain; its full sequence is Large ribosomal subunit protein uL23m (228 aa).

The disordered stretch occupies residues 194-228 (PEEEGWSEVEENLPLDESAESAAEESSSKGSETRQ). Over residues 195 to 216 (EEEGWSEVEENLPLDESAESAA) the composition is skewed to acidic residues.

Belongs to the universal ribosomal protein uL23 family. Component of the mitochondrial large ribosomal subunit (mt-LSU). Mature N.crassa 74S mitochondrial ribosomes consist of a small (37S) and a large (54S) subunit. The 37S small subunit contains a 16S ribosomal RNA (16S mt-rRNA) and 32 different proteins. The 54S large subunit contains a 23S rRNA (23S mt-rRNA) and 42 different proteins. uL23m forms the wall of the exit tunnel.

The protein localises to the mitochondrion. In terms of biological role, component of the mitochondrial ribosome (mitoribosome), a dedicated translation machinery responsible for the synthesis of mitochondrial genome-encoded proteins, including at least some of the essential transmembrane subunits of the mitochondrial respiratory chain. The mitoribosomes are attached to the mitochondrial inner membrane and translation products are cotranslationally integrated into the membrane. The polypeptide is Large ribosomal subunit protein uL23m (mrp20) (Neurospora crassa (strain ATCC 24698 / 74-OR23-1A / CBS 708.71 / DSM 1257 / FGSC 987)).